The primary structure comprises 319 residues: Cytochrome f (319 aa).

Residues 1-34 form the signal peptide; that stretch reads MQNRNTYEWAKKMTRLISVLVMIHIITRTSISNA. 4 residues coordinate heme: Y35, C55, C58, and H59. A helical transmembrane segment spans residues 287 to 304; sequence GLLLFLASVILAQIFLVL.

Belongs to the cytochrome f family. As to quaternary structure, the 4 large subunits of the cytochrome b6-f complex are cytochrome b6, subunit IV (17 kDa polypeptide, petD), cytochrome f and the Rieske protein, while the 4 small subunits are PetG, PetL, PetM and PetN. The complex functions as a dimer. Heme serves as cofactor.

Its subcellular location is the plastid. The protein resides in the chloroplast thylakoid membrane. Its function is as follows. Component of the cytochrome b6-f complex, which mediates electron transfer between photosystem II (PSII) and photosystem I (PSI), cyclic electron flow around PSI, and state transitions. This Pinus thunbergii (Japanese black pine) protein is Cytochrome f (petA).